The following is a 1941-amino-acid chain: Myosin light chain kinase, smooth muscle (1941 aa).

Ig-like C2-type domains lie at 33–122 (PAFI…VELT) and 156–244 (PKFA…AELS). A disulfide bridge connects residues C177 and C228. The residue at position 226 (Y226) is a Phosphotyrosine; by ABL1. Residues 255 to 329 (AVRGTKAPSP…RKVPQSSILQ (75 aa)) form a disordered region. A compositionally biased stretch (polar residues) spans 286 to 305 (NCPSPQRSGSSARATNSHLK). The residue at position 295 (S295) is a Phosphoserine. The span at 306 to 320 (SPQEPKPKLCEDAPR) shows a compositional bias: basic and acidic residues. Phosphoserine occurs at positions 333 and 355. Ig-like C2-type domains follow at residues 402–485 (PRFE…GQVS), 502–587 (PSFS…ATVT), 611–699 (PIFL…AVLT), and 709–809 (PWFI…APPR). Disulfide bonds link C423/C475 and C523/C571. Y452 is subject to Phosphotyrosine; by ABL1 and SRC. A disulfide bridge connects residues C730 and C793. At Y780 the chain carries Phosphotyrosine; by ABL1. 4 repeat units span residues 856-883 (DVRG…VGQL), 884-911 (DFRD…AEQM), 912-939 (DFRA…PQQV), and 940-966 (DFRS…AATP). Positions 856–985 (DVRGLLKRRV…KKSPSENGGN (130 aa)) are 5 X 28 AA approximate tandem repeats. Residues 911–951 (MDFRANLQRQVKPKTISEEERKVHSPQQVDFRSVLAKKGTP) are actin-binding (calcium/calmodulin-sensitive). The segment at 920–1120 (QVKPKTISEE…KRPESQGSAP (201 aa)) is disordered. S935 bears the Phosphoserine mark. Positions 936-951 (PQQVDFRSVLAKKGTP) are calmodulin-binding. One copy of the 1-5; truncated repeat lies at 967-985 (DFRSVLGGKKKSPSENGGN). 5 repeat units span residues 990-1002 (LNVK…TPAG), 1003-1014 (DAQAIGALKPVG), 1015-1026 (NAKPAETPKPIG), 1027-1038 (NAKPTETLKPVG), and 1039-1049 (NTKPAETLKPI). The interval 990–1049 (LNVKAGESPTPAGDAQAIGALKPVGNAKPAETPKPIGNAKPTETLKPVGNTKPAETLKPI) is 5 X 12 AA approximate tandem repeats. The tract at residues 1048-1482 (PIANAQPSGS…TVTVNTEQKV (435 aa)) is actin-binding (calcium/calmodulin-insensitive). Positions 1052–1065 (AQPSGSLKPVTNAQ) are enriched in polar residues. The span at 1085–1099 (AGKEEVKEVKNDVNC) shows a compositional bias: basic and acidic residues. The Ig-like C2-type 7 domain occupies 1120-1208 (PVFKEKLQDV…GQAECSCQVT (89 aa)). A disulfide bridge connects residues C1141 and C1192. The disordered stretch occupies residues 1212-1257 (AQTSENTKAPEMKSRRPKSSLPPVLGTESDATVKKKPAPKTPTKAA). The Ig-like C2-type 8 domain maps to 1260-1348 (PQIIQFPEDQ…GSRQAQVNLT (89 aa)). One can recognise a Fibronectin type-III domain in the interval 1356–1449 (PAGTPCASDI…ESELTAVGEK (94 aa)). The tract at residues 1435–1469 (SEPSQESELTAVGEKPEEPKDEVEVSDDDEKEPEV) is disordered. The segment covering 1453–1467 (PKDEVEVSDDDEKEP) has biased composition (acidic residues). S1460 bears the Phosphoserine mark. At Y1471 the chain carries Phosphotyrosine; by ABL1. Residues 1486–1741 (YDIEERLGSG…CTQCLQHPWL (256 aa)) form the Protein kinase domain. Residues 1492–1500 (LGSGKFGQV) and K1515 each bind ATP. A Phosphotyrosine; by ABL1 modification is found at Y1597. Residue D1607 is the Proton acceptor of the active site. Y1657 is modified (phosphotyrosine; by ABL1). Positions 1733 to 1796 (TQCLQHPWLM…SGLSGRKSST (64 aa)) are calmodulin-binding. S1781, S1782, S1794, S1795, and S1798 each carry phosphoserine. The interval 1789-1809 (LSGRKSSTGSPTSPINAEKLE) is disordered. A compositionally biased stretch (polar residues) spans 1792-1803 (RKSSTGSPTSPI). Position 1800 is a phosphothreonine (T1800). S1801 carries the post-translational modification Phosphoserine. In terms of domain architecture, Ig-like C2-type 9 spans 1831–1920 (PYFSKTIRDL…GEATCTAELI (90 aa)). An intrachain disulfide couples C1852 to C1904.

The protein belongs to the protein kinase superfamily. CAMK Ser/Thr protein kinase family. In terms of assembly, all isoforms including Telokin bind calmodulin. Interacts with CTTN; this interaction is reduced during thrombin-induced endothelial cell (EC) contraction but is promoted by the barrier-protective agonist sphingosine 1-phosphate (S1P) within lamellipodia. A complex made of ABL1, CTTN and MYLK regulates cortical actin-based cytoskeletal rearrangement critical to sphingosine 1-phosphate (S1P)-mediated endothelial cell (EC) barrier enhancement. Binds to NAA10/ARD1. Interacts with SVIL and PTK2B/PYK2. The cofactor is Mg(2+). Ca(2+) is required as a cofactor. In terms of processing, can probably be down-regulated by phosphorylation. Tyrosine phosphorylation by ABL1 increases kinase activity, reverses MLCK-mediated inhibition of Arp2/3-mediated actin polymerization, and enhances CTTN-binding. Phosphorylation by SRC at Tyr-452 promotes CTTN binding. The C-terminus is deglutamylated by AGTPBP1/CCP1, AGBL1/CCP4 and AGBL4/CCP6, leading to the formation of Myosin light chain kinase, smooth muscle, deglutamylated form. The consequences of C-terminal deglutamylation are unknown. Smooth muscle isoform is expressed in all tissues with highest levels in bladder, uterus, vas deferens, colon, ileum, and tracheae. Isoform 1 is expressed in lung, bladder, and vas deferens. Telokin is expressed in smooth muscle cells of the gut, reproductive tract and urinary tract, including in uterus, vas deferens, bladder, colon, kidney, ureter and ovary. Telokin is also detected in the trachea.

It is found in the cytoplasm. The protein localises to the cell projection. Its subcellular location is the lamellipodium. It localises to the cleavage furrow. The protein resides in the cytoskeleton. It is found in the stress fiber. It catalyses the reaction L-seryl-[myosin light chain] + ATP = O-phospho-L-seryl-[myosin light chain] + ADP + H(+). It carries out the reaction L-threonyl-[myosin light chain] + ATP = O-phospho-L-threonyl-[myosin light chain] + ADP + H(+). Functionally, calcium/calmodulin-dependent myosin light chain kinase implicated in smooth muscle contraction via phosphorylation of myosin light chains (MLC). Also regulates actin-myosin interaction through a non-kinase activity. Phosphorylates PTK2B/PYK2 and myosin light-chains. Involved in the inflammatory response (e.g. apoptosis, vascular permeability, leukocyte diapedesis), cell motility and morphology, airway hyperreactivity and other activities relevant to asthma. Required for tonic airway smooth muscle contraction that is necessary for physiological and asthmatic airway resistance. Necessary for gastrointestinal motility. Implicated in the regulation of endothelial as well as vascular permeability, probably via the regulation of cytoskeletal rearrangements. In the nervous system it has been shown to control the growth initiation of astrocytic processes in culture and to participate in transmitter release at synapses formed between cultured sympathetic ganglion cells. Critical participant in signaling sequences that result in fibroblast apoptosis. Plays a role in the regulation of epithelial cell survival. Required for epithelial wound healing, especially during actomyosin ring contraction during purse-string wound closure. Mediates RhoA-dependent membrane blebbing. Triggers TRPC5 channel activity in a calcium-dependent signaling, by inducing its subcellular localization at the plasma membrane. Promotes cell migration (including tumor cells) and tumor metastasis. PTK2B/PYK2 activation by phosphorylation mediates ITGB2 activation and is thus essential to trigger neutrophil transmigration during acute lung injury (ALI). May regulate optic nerve head astrocyte migration. Probably involved in mitotic cytoskeletal regulation. Regulates tight junction probably by modulating ZO-1 exchange in the perijunctional actomyosin ring. Mediates burn-induced microvascular barrier injury; triggers endothelial contraction in the development of microvascular hyperpermeability by phosphorylating MLC. Essential for intestinal barrier dysfunction. Mediates Giardia spp.-mediated reduced epithelial barrier function during giardiasis intestinal infection via reorganization of cytoskeletal F-actin and tight junctional ZO-1. Necessary for hypotonicity-induced Ca(2+) entry and subsequent activation of volume-sensitive organic osmolyte/anion channels (VSOAC) in cervical cancer cells. This chain is Myosin light chain kinase, smooth muscle, found in Mus musculus (Mouse).